Consider the following 190-residue polypeptide: Potassium-transporting ATPase KdpC subunit (190 aa).

Residues 10 to 30 (TFLFLLLITGGVYPLLTTALG) traverse the membrane as a helical segment.

It belongs to the KdpC family. The system is composed of three essential subunits: KdpA, KdpB and KdpC.

The protein localises to the cell inner membrane. Its function is as follows. Part of the high-affinity ATP-driven potassium transport (or Kdp) system, which catalyzes the hydrolysis of ATP coupled with the electrogenic transport of potassium into the cytoplasm. This subunit acts as a catalytic chaperone that increases the ATP-binding affinity of the ATP-hydrolyzing subunit KdpB by the formation of a transient KdpB/KdpC/ATP ternary complex. This Shigella flexneri serotype 5b (strain 8401) protein is Potassium-transporting ATPase KdpC subunit.